A 727-amino-acid chain; its full sequence is Glucans biosynthesis glucosyltransferase H (727 aa).

Residues 17-41 (GSAMPNERPGPMEPQSLSQMPEGFP) are disordered. The next 6 membrane-spanning stretches (helical) occupy residues 58 to 80 (FFVV…AVFS), 95 to 117 (FAIN…LLLL), 407 to 429 (GIMA…MLAL), 457 to 479 (ALRL…VLLL), 499 to 521 (VLFE…CGAV), and 572 to 594 (LLAW…AWTG).

The protein belongs to the glycosyltransferase 2 family. OpgH subfamily.

The protein localises to the cell inner membrane. It functions in the pathway glycan metabolism; osmoregulated periplasmic glucan (OPG) biosynthesis. Involved in the biosynthesis of osmoregulated periplasmic glucans (OPGs). The polypeptide is Glucans biosynthesis glucosyltransferase H (Shewanella oneidensis (strain ATCC 700550 / JCM 31522 / CIP 106686 / LMG 19005 / NCIMB 14063 / MR-1)).